The following is a 312-amino-acid chain: Ribonuclease HIII (312 aa).

An RNase H type-2 domain is found at 95 to 312 (MSILGSDEVG…TEKAFRLLKK (218 aa)). 3 residues coordinate a divalent metal cation: D101, E102, and D206.

The protein belongs to the RNase HII family. RnhC subfamily. Mn(2+) is required as a cofactor. The cofactor is Mg(2+).

The protein localises to the cytoplasm. The catalysed reaction is Endonucleolytic cleavage to 5'-phosphomonoester.. Endonuclease that specifically degrades the RNA of RNA-DNA hybrids. The chain is Ribonuclease HIII from Bacillus mycoides (strain KBAB4) (Bacillus weihenstephanensis).